Consider the following 286-residue polypeptide: ATP synthase gamma chain (286 aa).

This sequence belongs to the ATPase gamma chain family. In terms of assembly, F-type ATPases have 2 components, CF(1) - the catalytic core - and CF(0) - the membrane proton channel. CF(1) has five subunits: alpha(3), beta(3), gamma(1), delta(1), epsilon(1). CF(0) has three main subunits: a, b and c.

It is found in the cell inner membrane. Functionally, produces ATP from ADP in the presence of a proton gradient across the membrane. The gamma chain is believed to be important in regulating ATPase activity and the flow of protons through the CF(0) complex. This Shewanella frigidimarina (strain NCIMB 400) protein is ATP synthase gamma chain.